Reading from the N-terminus, the 1242-residue chain is ATP-dependent helicase/nuclease subunit A (1242 aa).

Residues 12–487 (SRWTDEQWKA…IDLASNFRSR (476 aa)) form the UvrD-like helicase ATP-binding domain. ATP is bound at residue 33 to 40 (AAAGSGKT). The UvrD-like helicase C-terminal domain maps to 514-808 (AAQLKYGADY…RVMTIHSSKG (295 aa)).

This sequence belongs to the helicase family. AddA subfamily. In terms of assembly, heterodimer of AddA and AddB/RexB. The cofactor is Mg(2+).

It carries out the reaction Couples ATP hydrolysis with the unwinding of duplex DNA by translocating in the 3'-5' direction.. It catalyses the reaction ATP + H2O = ADP + phosphate + H(+). In terms of biological role, the heterodimer acts as both an ATP-dependent DNA helicase and an ATP-dependent, dual-direction single-stranded exonuclease. Recognizes the chi site generating a DNA molecule suitable for the initiation of homologous recombination. The AddA nuclease domain is required for chi fragment generation; this subunit has the helicase and 3' -&gt; 5' nuclease activities. This is ATP-dependent helicase/nuclease subunit A from Geobacillus thermodenitrificans (strain NG80-2).